We begin with the raw amino-acid sequence, 590 residues long: Protein O-linked-mannose beta-1,4-N-acetylglucosaminyltransferase 2 (590 aa).

The Cytoplasmic segment spans residues 1–4 (MSVG). Residues 5–25 (TLLNGLLVSIVAALLWKYSKL) form a helical; Signal-anchor for type II membrane protein membrane-spanning segment. At 26–590 (SEHAALLEEE…PFADVLMCRT (565 aa)) the chain is on the lumenal side. Residues Asn98, Asn275, and Asn553 are each glycosylated (N-linked (GlcNAc...) asparagine). Positions 494–590 (RVRDPQCQTS…PFADVLMCRT (97 aa)) constitute a Fibronectin type-III domain.

The protein belongs to the glycosyltransferase 61 family.

It localises to the endoplasmic reticulum membrane. It catalyses the reaction 3-O-(alpha-D-mannosyl)-L-threonyl-[protein] + UDP-N-acetyl-alpha-D-glucosamine = 3-O-(N-acetyl-beta-D-glucosaminyl-(1-&gt;4)-alpha-D-mannosyl)-L-threonyl-[protein] + UDP + H(+). Its pathway is protein modification; protein glycosylation. Functionally, O-linked mannose beta-1,4-N-acetylglucosaminyltransferase that transfers UDP-N-acetyl-D-glucosamine to the 4-position of the mannose to generate N-acetyl-D-glucosamine-beta-1,4-O-D-mannosylprotein. Involved in the biosynthesis of the phosphorylated O-mannosyl trisaccharide (N-acetylgalactosamine-beta-3-N-acetylglucosamine-beta-4-(phosphate-6-)mannose), a carbohydrate structure present in alpha-dystroglycan (DAG1), which is required for binding laminin G-like domain-containing extracellular proteins with high affinity. This chain is Protein O-linked-mannose beta-1,4-N-acetylglucosaminyltransferase 2 (pomgnt2), found in Takifugu rubripes (Japanese pufferfish).